A 91-amino-acid polypeptide reads, in one-letter code: Aspartyl/glutamyl-tRNA(Asn/Gln) amidotransferase subunit C (91 aa).

Residues 68–91 (LDQDDALANAPETEDGRFKGPNVS) form a disordered region.

The protein belongs to the GatC family. In terms of assembly, heterotrimer of A, B and C subunits.

The enzyme catalyses L-glutamyl-tRNA(Gln) + L-glutamine + ATP + H2O = L-glutaminyl-tRNA(Gln) + L-glutamate + ADP + phosphate + H(+). The catalysed reaction is L-aspartyl-tRNA(Asn) + L-glutamine + ATP + H2O = L-asparaginyl-tRNA(Asn) + L-glutamate + ADP + phosphate + 2 H(+). Allows the formation of correctly charged Asn-tRNA(Asn) or Gln-tRNA(Gln) through the transamidation of misacylated Asp-tRNA(Asn) or Glu-tRNA(Gln) in organisms which lack either or both of asparaginyl-tRNA or glutaminyl-tRNA synthetases. The reaction takes place in the presence of glutamine and ATP through an activated phospho-Asp-tRNA(Asn) or phospho-Glu-tRNA(Gln). The chain is Aspartyl/glutamyl-tRNA(Asn/Gln) amidotransferase subunit C from Halobacterium salinarum (strain ATCC 29341 / DSM 671 / R1).